Consider the following 126-residue polypeptide: Fluoride-specific ion channel FluC (126 aa).

Helical transmembrane passes span 3 to 23, 35 to 55, 68 to 88, and 103 to 123; these read LSIL…WFLG, LGTL…VAYF, FIIT…AEVV, and IAIH…TVAV. Positions 75 and 78 each coordinate Na(+).

The protein belongs to the fluoride channel Fluc/FEX (TC 1.A.43) family.

It localises to the cell inner membrane. The catalysed reaction is fluoride(in) = fluoride(out). With respect to regulation, na(+) is not transported, but it plays an essential structural role and its presence is essential for fluoride channel function. Functionally, fluoride-specific ion channel. Important for reducing fluoride concentration in the cell, thus reducing its toxicity. The sequence is that of Fluoride-specific ion channel FluC from Paraburkholderia phymatum (strain DSM 17167 / CIP 108236 / LMG 21445 / STM815) (Burkholderia phymatum).